Consider the following 127-residue polypeptide: Aspartate 1-decarboxylase (127 aa).

Ser-25 functions as the Schiff-base intermediate with substrate; via pyruvic acid in the catalytic mechanism. Residue Ser-25 is modified to Pyruvic acid (Ser). Thr-57 is a binding site for substrate. Catalysis depends on Tyr-58, which acts as the Proton donor. 73–75 (GAA) lines the substrate pocket.

This sequence belongs to the PanD family. Heterooctamer of four alpha and four beta subunits. The cofactor is pyruvate. In terms of processing, is synthesized initially as an inactive proenzyme, which is activated by self-cleavage at a specific serine bond to produce a beta-subunit with a hydroxyl group at its C-terminus and an alpha-subunit with a pyruvoyl group at its N-terminus.

Its subcellular location is the cytoplasm. The catalysed reaction is L-aspartate + H(+) = beta-alanine + CO2. It participates in cofactor biosynthesis; (R)-pantothenate biosynthesis; beta-alanine from L-aspartate: step 1/1. In terms of biological role, catalyzes the pyruvoyl-dependent decarboxylation of aspartate to produce beta-alanine. The chain is Aspartate 1-decarboxylase from Neisseria meningitidis serogroup B (strain ATCC BAA-335 / MC58).